Reading from the N-terminus, the 253-residue chain is 5-oxoprolinase subunit A (253 aa).

Belongs to the LamB/PxpA family. Forms a complex composed of PxpA, PxpB and PxpC.

The catalysed reaction is 5-oxo-L-proline + ATP + 2 H2O = L-glutamate + ADP + phosphate + H(+). Catalyzes the cleavage of 5-oxoproline to form L-glutamate coupled to the hydrolysis of ATP to ADP and inorganic phosphate. The sequence is that of 5-oxoprolinase subunit A from Bacillus cereus (strain 03BB102).